The chain runs to 270 residues: Homeobox protein Hox-D12 (270 aa).

The tract at residues 102–122 (APEAAAGPEERGRTRPSFAPE) is disordered. A DNA-binding region (homeobox) is located at residues 202 to 261 (ARKKRKPYTKQQIAELENEFLVNEFINRQKRKELSNRLNLSDQQVKIWFQNRRMKKKRVV).

This sequence belongs to the Abd-B homeobox family.

The protein resides in the nucleus. Sequence-specific transcription factor which is part of a developmental regulatory system that provides cells with specific positional identities on the anterior-posterior axis. This chain is Homeobox protein Hox-D12 (HOXD12), found in Homo sapiens (Human).